Reading from the N-terminus, the 414-residue chain is Protein IQ-DOMAIN 8 (414 aa).

The Nuclear localization signal 1 signature appears at 14–21; it reads NKKNITDD. A disordered region spans residues 40 to 61; sequence LISSSKGFKSRGGSYGTPSLGS. IQ domains follow at residues 92 to 120, 121 to 143, and 144 to 169; these read REWAATRIQAAFRAFLARQALRALKAVVR, IQAIFRGRQVRKQADVTLRCMQA, and LVRVQARVRAHCNRGPSDGQELEKPS. Residues 119–132 are calmodulin-binding; it reads VRIQAIFRGRQVRK. Disordered regions lie at residues 156–190, 218–244, and 262–329; these read NRGPSDGQELEKPSDQQKDDPAKQAEKGWCDSPGS, HQPRTCPSPAKASKQGSVKKNNGSCKS, and GRLM…SGSF. Residues 164–184 show a composition bias toward basic and acidic residues; that stretch reads ELEKPSDQQKDDPAKQAEKGW. Over residues 231-244 the composition is skewed to polar residues; that stretch reads KQGSVKKNNGSCKS. Positions 274–289 are enriched in basic and acidic residues; that stretch reads NARKSESSVSEHDTVQ. Over residues 307-328 the composition is skewed to low complexity; that stretch reads SSSATSSESSSTSQSPVPFSGS. A Nuclear localization signal 2 motif is present at residues 336 to 343; that stretch reads YRKPSYMS. Residues 347–398 form a disordered region; it reads SIKAKQRRSGSSSSCSKTPFEKKQSMSYNGDVNVRRSAGSDPLNNQWTDLYP.

This sequence belongs to the IQD family. In terms of assembly, binds to multiple calmodulin (CaM) in the presence of Ca(2+) and CaM-like proteins.

The protein localises to the nucleus. Its subcellular location is the cytoplasm. It localises to the cytoskeleton. The protein resides in the nucleus envelope. Functionally, may be involved in cooperative interactions with calmodulins or calmodulin-like proteins. Recruits calmodulin proteins to microtubules, thus being a potential scaffold in cellular signaling and trafficking. May associate with nucleic acids and regulate gene expression at the transcriptional or post-transcriptional level. This is Protein IQ-DOMAIN 8 from Arabidopsis thaliana (Mouse-ear cress).